A 273-amino-acid chain; its full sequence is MNVSELRLRFANALARIRATKPLVHHITNYVVMNDTANVTLHVGALPVMAHTTEEAAEMTGLAGALVLNIGTLSPAWVDAMLLAGRRANESGIPVVLDPVGAGATAYRTETCLRLLGGLRVAVIRGNSGEIGTLSGAGGVVRGVESVEGVANPAAAAGVLAHRYNTVTVITGQRDIVTDGGRVLVVDNGHEWLTTITGSGCMATALVAAFAAVEPDFLVAAAGALAAYGLAAELAAREARGPASFRTALLDRIYSLTPEQVAEGARVERLRQP.

Substrate is bound at residue M49. Positions 125 and 171 each coordinate ATP. G198 serves as a coordination point for substrate.

This sequence belongs to the Thz kinase family. The cofactor is Mg(2+).

It catalyses the reaction 5-(2-hydroxyethyl)-4-methylthiazole + ATP = 4-methyl-5-(2-phosphooxyethyl)-thiazole + ADP + H(+). It functions in the pathway cofactor biosynthesis; thiamine diphosphate biosynthesis; 4-methyl-5-(2-phosphoethyl)-thiazole from 5-(2-hydroxyethyl)-4-methylthiazole: step 1/1. Its function is as follows. Catalyzes the phosphorylation of the hydroxyl group of 4-methyl-5-beta-hydroxyethylthiazole (THZ). The chain is Hydroxyethylthiazole kinase from Desulforudis audaxviator (strain MP104C).